Consider the following 121-residue polypeptide: HLLQFNKMLKFETRKNAVPFYAFGCYCGWGGQRRPKDATDRCCFVHDCCYEKVTKCNTKWDFYRYSLKSGYITCGKGTWCKEQICECDRVAAECLRRSLSTYKNEYMFYPDSRCREPSETC.

7 disulfides stabilise this stretch: cysteine 25–cysteine 114, cysteine 27–cysteine 43, cysteine 42–cysteine 94, cysteine 48–cysteine 121, cysteine 49–cysteine 87, cysteine 56–cysteine 80, and cysteine 74–cysteine 85. Residues tyrosine 26, glycine 28, and glycine 30 each contribute to the Ca(2+) site. Histidine 46 is an active-site residue. Residue aspartate 47 participates in Ca(2+) binding. Aspartate 88 is a catalytic residue.

It belongs to the phospholipase A2 family. Group II subfamily. D49 sub-subfamily. When this protein is associated with crotapotin (F5 or F7), it forms the crotoxin protein. It depends on Ca(2+) as a cofactor. As to expression, expressed by the venom gland.

Its subcellular location is the secreted. The enzyme catalyses a 1,2-diacyl-sn-glycero-3-phosphocholine + H2O = a 1-acyl-sn-glycero-3-phosphocholine + a fatty acid + H(+). Its activity is regulated as follows. Activated by heparin. Inhibited by its chaperone crotapotin. Functionally, snake venom phospholipase A2 (PLA2) that has anticoagulant activity and inhibits bactericial growth of the Gram-negative bacteria Xanthomonas axonopodis pv. passiflorae (in monomeric form). PLA2 catalyzes the calcium-dependent hydrolysis of the 2-acyl groups in 3-sn-phosphoglycerides. The protein is Basic phospholipase A2 F17 of Crotalus durissus terrificus (South American rattlesnake).